We begin with the raw amino-acid sequence, 87 residues long: MVCIPCIVIPVLLWVYKRFLEPIIYPFIGPIISRFWPTNIAVQENGTGDVKASEKSNGACKTKADVVVANGPSANGPATPISDKKID.

Belongs to the UPF0729 family.

This Esox lucius (Northern pike) protein is UPF0729 protein C18orf32 homolog.